A 117-amino-acid chain; its full sequence is Cell division protein FtsB (117 aa).

At 1–6 (MRDWRW) the chain is on the cytoplasmic side. Residues 7 to 24 (MLLVLALLLGWLQYRFWF) traverse the membrane as a helical segment. Residues 25–117 (GPGNSGEVMM…QVGDHPADVP (93 aa)) are Periplasmic-facing. Positions 29 to 69 (SGEVMMLEAQVANQERDNEGLQQRNDALAAEVKDLKEGQSA) form a coiled coil.

It belongs to the FtsB family. As to quaternary structure, part of a complex composed of FtsB, FtsL and FtsQ.

The protein resides in the cell inner membrane. Functionally, essential cell division protein. May link together the upstream cell division proteins, which are predominantly cytoplasmic, with the downstream cell division proteins, which are predominantly periplasmic. This is Cell division protein FtsB from Stenotrophomonas maltophilia (strain K279a).